A 24-amino-acid polypeptide reads, in one-letter code: Ascaphin-2 (24 aa).

Expressed by the skin glands.

Its subcellular location is the secreted. Functionally, antimicrobial peptide that shows higher potency against Gram-negative bacteria than against Gram-positive bacteria. Has a very week hemolytic activity. The sequence is that of Ascaphin-2 from Ascaphus truei (Coastal tailed frog).